The sequence spans 481 residues: Pre-mRNA-splicing factor sap114 (481 aa).

Positions 1–15 (MSSLMEFQDRNTTNN) are enriched in polar residues. The interval 1 to 34 (MSSLMEFQDRNTTNNETEHQKSITDQSSSVPAGV) is disordered. 2 SURP motif repeats span residues 44-86 (IIDK…HPYY) and 147-189 (VLRL…YPYF). 2 disordered regions span residues 335–373 (PSLASPEKGGISSTTSVSPAAQASPVLSTTTQPKVQKPV) and 452–481 (GVEISQEEIERRKRAATQSAWGATPTNKRR). 2 stretches are compositionally biased toward polar residues: residues 345–368 (ISSTTSVSPAAQASPVLSTTTQPK) and 467–481 (ATQSAWGATPTNKRR).

As to quaternary structure, belongs to the 40S cdc5-associated complex (or cwf complex), a spliceosome sub-complex reminiscent of a late-stage spliceosome composed of the U2, U5 and U6 snRNAs and at least brr2, cdc5, cwf2/prp3, cwf3/syf1, cwf4/syf3, cwf5/ecm2, spp42/cwf6, cwf7/spf27, cwf8, cwf9, cwf10, cwf11, cwf12, prp45/cwf13, cwf14, cwf15, cwf16, cwf17, cwf18, cwf19, cwf20, cwf21, cwf22, cwf23, cwf24, cwf25, cwf26, cyp7/cwf27, cwf28, cwf29/ist3, lea1, msl1, prp5/cwf1, prp10, prp12/sap130, prp17, prp22, sap61, sap62, sap114, sap145, slu7, smb1, smd1, smd3, smf1, smg1 and syf2.

Its subcellular location is the nucleus. Involved in pre-mRNA splicing. May be involved in endoplasmic reticulum-associated protein degradation (ERAD) and required for growth at low and high temperatures. The protein is Pre-mRNA-splicing factor sap114 (sap114) of Schizosaccharomyces pombe (strain 972 / ATCC 24843) (Fission yeast).